Here is a 474-residue protein sequence, read N- to C-terminus: Selection and upkeep of intraepithelial T-cells protein 4 (474 aa).

The signal sequence occupies residues 1–25 (MGATEVLTSYCVVLCLLQMVALSSG). The Extracellular portion of the chain corresponds to 26 to 241 (HFTVIGSQRP…VLSGELFSWK (216 aa)). Positions 27–140 (FTVIGSQRPI…EEHITEVKVT (114 aa)) constitute an Ig-like V-type domain. Disulfide bonds link C48–C122 and C162–C216. N-linked (GlcNAc...) asparagine glycosylation is found at N111 and N199. Residues 141 to 234 (ATSSDIQILM…QEQSINIVLS (94 aa)) enclose the Ig-like C1-type domain. A helical membrane pass occupies residues 242-262 (IVWIMILSTISFVMIDFCMTY). Over 263-298 (CVQQQLIHEESLSTVDNDQCESDQSEGTCYKRNYPW) the chain is Cytoplasmic. A helical transmembrane segment spans residues 299 to 319 (IIIAVVPIISVFAIIGVMLFL). Over 320 to 341 (HLEQRVTILEQHFELDTLWLED) the chain is Extracellular. The chain crosses the membrane as a helical span at residues 342-362 (ISVILCVVIVSNINLIPLIYF). The Cytoplasmic portion of the chain corresponds to 363-381 (RLHEHVPRFKDRSPILNKA). A helical transmembrane segment spans residues 382–402 (VVFLHFIYFSIVCGTILLVHL). Over 403–420 (QLRNKVSISDSLFSLYNS) the chain is Extracellular. Residues 421–441 (WLTDISMILGFLLSIFIVTTI) traverse the membrane as a helical segment. Residues 442–474 (AKSSLFNKKWCIGLCIHMKEAEATGGPCEGEEL) lie on the Cytoplasmic side of the membrane.

Belongs to the SKINT family. Expressed in skin, thymus and, to a lower extent, bladder and testis.

The protein localises to the membrane. Its function is as follows. May act by engaging a cell surface molecule on immature T-cells in the embryonic thymus. This chain is Selection and upkeep of intraepithelial T-cells protein 4 (Skint4), found in Mus musculus (Mouse).